Reading from the N-terminus, the 235-residue chain is MSHKRRGLVIYQDQKQQQQHPPGQSLSSISWSPTRRPHHPLKQQSTNSFSEILSKSSVQPNVQHDGNHMPISLLVLKQEHHKQQQQQQQRQNIRSQNSTPPLRQLVQESQWTSSASNSSLKKQEKQPQTFYNTDSKLVSQLHSSVKDLDAIIQTHKPKFDTIIRDFSQATILSSNELLIKLPKDQTIILHSRAPKINAEWLQNKVNDPSASLVIDSRSFLTLCNNIKWYLHWKFI.

Disordered regions lie at residues methionine 1–asparagine 47 and glutamine 78–glutamine 128. Residues histidine 20–proline 33 show a composition bias toward polar residues. Positions glutamine 84–serine 98 are enriched in low complexity. The span at valine 106 to glutamine 128 shows a compositional bias: polar residues.

This is an uncharacterized protein from Saccharomyces cerevisiae (strain ATCC 204508 / S288c) (Baker's yeast).